A 190-amino-acid polypeptide reads, in one-letter code: Potassium-transporting ATPase KdpC subunit (190 aa).

The helical transmembrane segment at 10 to 30 (TFIFLLLITGGVYPLLTTALG) threads the bilayer.

It belongs to the KdpC family. In terms of assembly, the system is composed of three essential subunits: KdpA, KdpB and KdpC.

The protein resides in the cell inner membrane. In terms of biological role, part of the high-affinity ATP-driven potassium transport (or Kdp) system, which catalyzes the hydrolysis of ATP coupled with the electrogenic transport of potassium into the cytoplasm. This subunit acts as a catalytic chaperone that increases the ATP-binding affinity of the ATP-hydrolyzing subunit KdpB by the formation of a transient KdpB/KdpC/ATP ternary complex. The chain is Potassium-transporting ATPase KdpC subunit from Escherichia coli O9:H4 (strain HS).